Consider the following 122-residue polypeptide: Large ribosomal subunit protein uL14c (122 aa).

This sequence belongs to the universal ribosomal protein uL14 family. In terms of assembly, part of the 50S ribosomal subunit.

It is found in the plastid. It localises to the chloroplast. Its function is as follows. Binds to 23S rRNA. This is Large ribosomal subunit protein uL14c from Gnetum parvifolium (Small-leaved jointfir).